A 294-amino-acid polypeptide reads, in one-letter code: 33 kDa chaperonin (294 aa).

2 disulfides stabilise this stretch: Cys230–Cys232 and Cys263–Cys266.

This sequence belongs to the HSP33 family. Post-translationally, under oxidizing conditions two disulfide bonds are formed involving the reactive cysteines. Under reducing conditions zinc is bound to the reactive cysteines and the protein is inactive.

Its subcellular location is the cytoplasm. Functionally, redox regulated molecular chaperone. Protects both thermally unfolding and oxidatively damaged proteins from irreversible aggregation. Plays an important role in the bacterial defense system toward oxidative stress. The chain is 33 kDa chaperonin from Chromobacterium violaceum (strain ATCC 12472 / DSM 30191 / JCM 1249 / CCUG 213 / NBRC 12614 / NCIMB 9131 / NCTC 9757 / MK).